A 587-amino-acid polypeptide reads, in one-letter code: APOBEC1 complementation factor (587 aa).

RRM domains are found at residues 56–134, 136–218, and 231–303; these read CEIF…ASVD, CRLF…WAEP, and KILY…LAKP. Residues 360–409 form a required for nuclear localization region; the sequence is HFPATKGHLSNRAIIRAPSVRGAAGVRGLGGRGYLAYTGLGRGYQVKGDK. At Thr-491 the chain carries Phosphothreonine.

Part of the apolipoprotein B mRNA editing complex with APOBEC1. Interacts with TNPO2; TNPO2 may be responsible for transport of A1CF into the nucleus. Interacts with SYNCRIP. Interacts with CELF2/CUGBP2. Interacts with RBM47.

It localises to the nucleus. Its subcellular location is the endoplasmic reticulum. The protein localises to the cytoplasm. Its function is as follows. Essential component of the apolipoprotein B mRNA editing enzyme complex which is responsible for the postranscriptional editing of a CAA codon for Gln to a UAA codon for stop in APOB mRNA. Binds to APOB mRNA and is probably responsible for docking the catalytic subunit, APOBEC1, to the mRNA to allow it to deaminate its target cytosine. The complex also seems to protect the edited APOB mRNA from nonsense-mediated decay. In Pongo abelii (Sumatran orangutan), this protein is APOBEC1 complementation factor (A1CF).